A 153-amino-acid polypeptide reads, in one-letter code: Histone H2A (153 aa).

Disordered regions lie at residues 1-27 (MDTGAKLKKGAGERKGGGPKKKPVSRS) and 131-153 (KAAAAATKEPKSPAKATKSPKKA). The span at 132-147 (AAAAATKEPKSPAKAT) shows a compositional bias: low complexity. The SPKK motif signature appears at 149–152 (SPKK).

The protein belongs to the histone H2A family. As to quaternary structure, the nucleosome is a histone octamer containing two molecules each of H2A, H2B, H3 and H4 assembled in one H3-H4 heterotetramer and two H2A-H2B heterodimers. The octamer wraps approximately 147 bp of DNA.

Its subcellular location is the nucleus. It is found in the chromosome. Its function is as follows. Core component of nucleosome. Nucleosomes wrap and compact DNA into chromatin, limiting DNA accessibility to the cellular machineries which require DNA as a template. Histones thereby play a central role in transcription regulation, DNA repair, DNA replication and chromosomal stability. DNA accessibility is regulated via a complex set of post-translational modifications of histones, also called histone code, and nucleosome remodeling. In Euphorbia esula (Leafy spurge), this protein is Histone H2A.